The chain runs to 77 residues: Large ribosomal subunit protein bL28 (77 aa).

Positions 1 to 25 (MARVCQVTGKAPMSGNNVSHANNKT) are disordered.

The protein belongs to the bacterial ribosomal protein bL28 family.

This Paraburkholderia phymatum (strain DSM 17167 / CIP 108236 / LMG 21445 / STM815) (Burkholderia phymatum) protein is Large ribosomal subunit protein bL28.